Here is a 705-residue protein sequence, read N- to C-terminus: Methionine--tRNA ligase (705 aa).

The 'HIGH' region motif lies at Pro17–His27. Zn(2+)-binding residues include Cys149, Cys152, Cys162, and Cys165. The 'KMSKS' region motif lies at Lys347 to Ser351. Residue Lys350 participates in ATP binding. One can recognise a tRNA-binding domain in the interval Glu604 to Gln705.

The protein belongs to the class-I aminoacyl-tRNA synthetase family. MetG type 1 subfamily. Homodimer. Zn(2+) serves as cofactor.

It is found in the cytoplasm. The catalysed reaction is tRNA(Met) + L-methionine + ATP = L-methionyl-tRNA(Met) + AMP + diphosphate. Its function is as follows. Is required not only for elongation of protein synthesis but also for the initiation of all mRNA translation through initiator tRNA(fMet) aminoacylation. The sequence is that of Methionine--tRNA ligase from Chlorobium chlorochromatii (strain CaD3).